The following is a 233-amino-acid chain: MAKRPTKRAVVLLSGGLDSTTCLAVARRDGFEAHCLSVDYGQRHKGELARARRLSRALGAADHRVVKVDLSAFGGSALTDRAIAVPKGRSGRRRAAEIPVTYVPARNTVLLALALAHAETLGAEDVYVGVNAIDYSGYPDCRPAFLRAFERLATVATKAGVEGRPLRIHAPLLRLTKAGIVRLGTSLGVPYRVTLSCYDPVRGRACGACDACVLRRKGFAEAGIPDPTLYVQK.

ATP is bound at residue 13-23; that stretch reads LSGGLDSTTCL. Cysteine 197, cysteine 206, cysteine 209, and cysteine 212 together coordinate Zn(2+).

It belongs to the QueC family. The cofactor is Zn(2+).

The enzyme catalyses 7-carboxy-7-deazaguanine + NH4(+) + ATP = 7-cyano-7-deazaguanine + ADP + phosphate + H2O + H(+). The protein operates within purine metabolism; 7-cyano-7-deazaguanine biosynthesis. Functionally, catalyzes the ATP-dependent conversion of 7-carboxy-7-deazaguanine (CDG) to 7-cyano-7-deazaguanine (preQ(0)). The polypeptide is 7-cyano-7-deazaguanine synthase (Anaeromyxobacter sp. (strain Fw109-5)).